The following is a 94-amino-acid chain: Ribonuclease VapC3 (94 aa).

Asp6 contacts Mg(2+).

The protein belongs to the PINc/VapC protein family. Mg(2+) serves as cofactor.

Toxic component of a type II toxin-antitoxin (TA) system. An RNase. Its cognate antitoxin is VapB3. In Methanocaldococcus jannaschii (strain ATCC 43067 / DSM 2661 / JAL-1 / JCM 10045 / NBRC 100440) (Methanococcus jannaschii), this protein is Ribonuclease VapC3 (vapC3).